The sequence spans 839 residues: Sodium/hydrogen exchanger 3 (839 aa).

An N-terminal signal peptide occupies residues methionine 1–glycine 32. Topologically, residues valine 33–histidine 56 are extracellular. The helical transmembrane segment at valine 57–leucine 79 threads the bilayer. Topologically, residues serine 80–valine 87 are cytoplasmic. Residues proline 88–alanine 107 form a helical membrane-spanning segment. The Extracellular segment spans residues aspartate 108–threonine 116. A helical transmembrane segment spans residues proline 117–tyrosine 134. Residues phenylalanine 135–proline 137 are Cytoplasmic-facing. Residues asparagine 138–serine 173 form a helical membrane-spanning segment. A 1,2-diacyl-sn-glycero-3-phospho-(1D-myo-inositol) contacts are provided by glycine 143, glycine 146, and threonine 147. At glycine 174 to phenylalanine 186 the chain is on the extracellular side. The chain crosses the membrane as a helical span at residues leucine 187 to valine 208. Residues histidine 209–valine 210 are Cytoplasmic-facing. A helical membrane pass occupies residues asparagine 211 to leucine 242. Over glycine 243–glycine 249 the chain is Extracellular. Residues valine 250–threonine 284 traverse the membrane as a helical segment. Over lysine 285–histidine 286 the chain is Cytoplasmic. A helical membrane pass occupies residues valine 287–leucine 309. The Extracellular segment spans residues serine 310–leucine 311. A helical transmembrane segment spans residues serine 312 to valine 328. Over lysine 329 to glutamine 335 the chain is Cytoplasmic. A helical transmembrane segment spans residues serine 336–valine 364. Over aspartate 365–asparagine 372 the chain is Extracellular. A helical transmembrane segment spans residues threonine 373 to glutamine 394. Residues threonine 395–glutamate 407 are Cytoplasmic-facing. Methionine 403 is an a 1,2-diacyl-sn-glycero-3-phospho-(1D-myo-inositol) binding site. A helical membrane pass occupies residues isoleucine 408–leucine 431. Topologically, residues aspartate 432–glutamate 438 are extracellular. A helical membrane pass occupies residues lysine 439–lysine 472. Over serine 473–methionine 839 the chain is Cytoplasmic. A 1,2-diacyl-sn-glycero-3-phospho-(1D-myo-inositol) contacts are provided by glutamine 502, isoleucine 503, and histidine 505. Serine 560 and serine 568 each carry phosphoserine. An interaction with EZR region spans residues arginine 581 to glutamate 595. Residues asparagine 596–threonine 673 form an interaction with NHERF4 region. The interaction with AHCYL1 stretch occupies residues valine 597–proline 701. Phosphoserine occurs at positions 598 and 613. Serine 669 is subject to Phosphoserine; by SGK1. Residues lysine 688–asparagine 697 are compositionally biased toward basic residues. Residues lysine 688–proline 710 are disordered. A phosphoserine mark is found at serine 724, serine 815, and serine 818.

It belongs to the monovalent cation:proton antiporter 1 (CPA1) transporter (TC 2.A.36) family. Homodimer. Found in the forms of complex and dynamic macromolecular complexes. Binds NHERF1 and NHERF2. Interacts with CHP1, CHP2 and SHANK2. Interacts with NHERF4 and interactions decrease in response to elevated calcium ion levels. Interacts with PDZK1 (via C-terminal PDZ domain). Interacts with AHCYL1; the interaction is required for SLC9A3 activity. Interacts with EZR; interaction targets SLC9A3 to the apical membrane. Interacts with SNX27 (via PDZ domains); directs SLC9A3 membrane insertion from early endosomes to the plasma membrane. Phosphorylated by PKA, which inhibits activity. Phosphorylation at Ser-669 by SGK1 is associated with increased abundance at the cell membrane.

Its subcellular location is the apical cell membrane. The protein resides in the cell membrane. It is found in the recycling endosome membrane. It localises to the early endosome membrane. The catalysed reaction is Na(+)(in) + H(+)(out) = Na(+)(out) + H(+)(in). Seems to switch between active and inactive modes in response to various stimuli. Activated directly or indirectly by membrane phosphatidylinositol (PIs). Regulated by a variety of auxiliary proteins, which facilitate the maturation, cell surface expression and function of the transporter. Inhibited specifically by the drug tenapanor. Functionally, plasma membrane Na(+)/H(+) antiporter. Exchanges intracellular H(+) ions for extracellular Na(+) in 1:1 stoichiometry, playing a key role in salt and fluid absorption and pH homeostasis. Major apical Na(+)/H(+) exchanger in kidney and intestine playing an important role in renal and intestine Na(+) absorption and blood pressure regulation. The sequence is that of Sodium/hydrogen exchanger 3 (SLC9A3) from Didelphis virginiana (North American opossum).